The following is a 368-amino-acid chain: Putative zinc metalloprotease Cj1068 (368 aa).

His36 provides a ligand contact to Zn(2+). Residue Glu37 is part of the active site. His40 contacts Zn(2+). The next 3 helical transmembrane spans lie at 112–134, 291–313, and 338–360; these read IYIL…IIIG, FTLL…LLPI, and TFEY…ATYN. In terms of domain architecture, PDZ spans 126–197; sequence AFFLYIIIGN…LKILINREGK (72 aa).

Belongs to the peptidase M50B family. Zn(2+) is required as a cofactor.

The protein localises to the cell inner membrane. The chain is Putative zinc metalloprotease Cj1068 from Campylobacter jejuni subsp. jejuni serotype O:2 (strain ATCC 700819 / NCTC 11168).